The following is a 1357-amino-acid chain: Major yolk protein (1357 aa).

Residues 1–15 form the signal peptide; sequence MRAAILFCLVASSMA. Transferrin-like domains follow at residues 132-478 and 493-1101; these read VRWC…GEVY and AKIC…AIVK. Residues asparagine 198, asparagine 227, asparagine 304, asparagine 310, asparagine 402, asparagine 499, asparagine 530, asparagine 541, asparagine 572, asparagine 578, asparagine 625, asparagine 639, asparagine 692, asparagine 732, asparagine 741, asparagine 1035, asparagine 1043, asparagine 1081, asparagine 1128, asparagine 1208, asparagine 1241, and asparagine 1258 are each glycosylated (N-linked (GlcNAc...) asparagine).

Belongs to the transferrin family. As to expression, synthesized in the intestines of the females and males and also in ovaries and testis.

The protein localises to the secreted. Its function is as follows. May serve the following two functions: a classical role as a yolk protein precursor and probably shuttle iron to developing germ cells. The polypeptide is Major yolk protein (Strongylocentrotus purpuratus (Purple sea urchin)).